A 106-amino-acid polypeptide reads, in one-letter code: Thiosulfate sulfurtransferase GlpE (106 aa).

Residues 17–105 enclose the Rhodanese domain; the sequence is EQNEARLVDI…SYRAELPVIA (89 aa). Cysteine 65 (cysteine persulfide intermediate) is an active-site residue.

This sequence belongs to the GlpE family.

The protein localises to the cytoplasm. It carries out the reaction thiosulfate + hydrogen cyanide = thiocyanate + sulfite + 2 H(+). The enzyme catalyses thiosulfate + [thioredoxin]-dithiol = [thioredoxin]-disulfide + hydrogen sulfide + sulfite + 2 H(+). Functionally, transferase that catalyzes the transfer of sulfur from thiosulfate to thiophilic acceptors such as cyanide or dithiols. May function in a CysM-independent thiosulfate assimilation pathway by catalyzing the conversion of thiosulfate to sulfite, which can then be used for L-cysteine biosynthesis. The polypeptide is Thiosulfate sulfurtransferase GlpE (Vibrio atlanticus (strain LGP32) (Vibrio splendidus (strain Mel32))).